The sequence spans 677 residues: Zinc finger protein 526 (677 aa).

C2H2-type zinc fingers lie at residues 57–79 (FMCS…QEQH), 109–131 (FQCG…QDAH), and 141–164 (YQCG…KAQH). Residues 167-190 (TAAAKPPVPPPLPPVTPPPPPPAP) form a disordered region. The span at 172–190 (PPVPPPLPPVTPPPPPPAP) shows a compositional bias: pro residues. The segment at 198–220 (YECPECSTLCTTPEEFLEHQGTH) adopts a C2H2-type 4 zinc-finger fold. The segment covering 223-232 (SLEKEEHNGL) has biased composition (basic and acidic residues). The tract at residues 223-300 (SLEKEEHNGL…RRASHGPASA (78 aa)) is disordered. A compositionally biased stretch (acidic residues) spans 233–257 (EEEEEDDEDDNEETEEEEEAAAEVG). 4 consecutive C2H2-type zinc fingers follow at residues 304–326 (FYCS…GRAH), 331–353 (HECT…LRLH), 359–381 (YLCV…RRAH), and 387–408 (HRCR…RRTH). The interval 408-449 (HAGKSGAPPSAAPPTVASAVASLAPAEPTPPPPAPPTPPAQL) is disordered. Low complexity predominate over residues 410–433 (GKSGAPPSAAPPTVASAVASLAPA). A compositionally biased stretch (pro residues) spans 434 to 449 (EPTPPPPAPPTPPAQL). 5 C2H2-type zinc fingers span residues 449–472 (LPCP…RAVH), 479–501 (HRCG…LRTH), 507–529 (FQCH…QLTH), 535–557 (YQCL…RRLH), and 580–602 (YYCG…QRVH). The tract at residues 608-627 (LTLQPPRSPPPAPPPPPEPQ) is disordered. A compositionally biased stretch (pro residues) spans 613–626 (PRSPPPAPPPPPEP).

The protein belongs to the krueppel C2H2-type zinc-finger protein family.

The protein resides in the nucleus. In terms of biological role, may be involved in transcriptional regulation. This chain is Zinc finger protein 526 (ZNF526), found in Bos taurus (Bovine).